We begin with the raw amino-acid sequence, 870 residues long: Leucine--tRNA ligase (870 aa).

The 'HIGH' region motif lies at 43–53 (PYPSGRLHMGH). The 'KMSKS' region motif lies at 626–630 (KMSKS). Lysine 629 lines the ATP pocket.

It belongs to the class-I aminoacyl-tRNA synthetase family.

It localises to the cytoplasm. The catalysed reaction is tRNA(Leu) + L-leucine + ATP = L-leucyl-tRNA(Leu) + AMP + diphosphate. The sequence is that of Leucine--tRNA ligase from Pseudoalteromonas atlantica (strain T6c / ATCC BAA-1087).